Consider the following 178-residue polypeptide: MAERSTDFRPGLPSQRQVVELLDGEFARAGYDIEDVVIDAATRPPRIVVIADGDRGLDLDAVAELSRLASEQLDTLDTPPYVLEVTSPGVDRPLTEEKHYRRAQGRLAEVTLADGSTLTGRIGAVQNATVALVVREARSNLTVRDIALDAVVKAVVQVEFSPPSPRELELAGVSGKET.

The protein belongs to the RimP family.

It is found in the cytoplasm. Required for maturation of 30S ribosomal subunits. The protein is Ribosome maturation factor RimP of Mycolicibacterium gilvum (strain PYR-GCK) (Mycobacterium gilvum (strain PYR-GCK)).